The sequence spans 218 residues: ATP phosphoribosyltransferase (218 aa).

Belongs to the ATP phosphoribosyltransferase family. Short subfamily. Heteromultimer composed of HisG and HisZ subunits.

The protein resides in the cytoplasm. It catalyses the reaction 1-(5-phospho-beta-D-ribosyl)-ATP + diphosphate = 5-phospho-alpha-D-ribose 1-diphosphate + ATP. It participates in amino-acid biosynthesis; L-histidine biosynthesis; L-histidine from 5-phospho-alpha-D-ribose 1-diphosphate: step 1/9. Catalyzes the condensation of ATP and 5-phosphoribose 1-diphosphate to form N'-(5'-phosphoribosyl)-ATP (PR-ATP). Has a crucial role in the pathway because the rate of histidine biosynthesis seems to be controlled primarily by regulation of HisG enzymatic activity. This is ATP phosphoribosyltransferase from Burkholderia mallei (strain ATCC 23344).